The chain runs to 356 residues: 1-deoxy-D-xylulose 5-phosphate reductoisomerase (356 aa).

The NADPH site is built by T7, G8, S9, I10, G31, N33, and N111. K112 is a binding site for 1-deoxy-D-xylulose 5-phosphate. E113 lines the NADPH pocket. A Mn(2+)-binding site is contributed by D131. 4 residues coordinate 1-deoxy-D-xylulose 5-phosphate: S132, E133, S155, and H178. E133 contacts Mn(2+). G184 lines the NADPH pocket. 1-deoxy-D-xylulose 5-phosphate is bound by residues S191, N196, K197, and E200. Residue E200 participates in Mn(2+) binding.

This sequence belongs to the DXR family. It depends on Mg(2+) as a cofactor. Requires Mn(2+) as cofactor.

The enzyme catalyses 2-C-methyl-D-erythritol 4-phosphate + NADP(+) = 1-deoxy-D-xylulose 5-phosphate + NADPH + H(+). It functions in the pathway isoprenoid biosynthesis; isopentenyl diphosphate biosynthesis via DXP pathway; isopentenyl diphosphate from 1-deoxy-D-xylulose 5-phosphate: step 1/6. Catalyzes the NADPH-dependent rearrangement and reduction of 1-deoxy-D-xylulose-5-phosphate (DXP) to 2-C-methyl-D-erythritol 4-phosphate (MEP). This chain is 1-deoxy-D-xylulose 5-phosphate reductoisomerase, found in Campylobacter jejuni subsp. jejuni serotype O:23/36 (strain 81-176).